A 239-amino-acid chain; its full sequence is MVQHLTAEEIIQYISDAKKSTPIKVYLNGNFEGITYPESFKVFGSEQSKVIFCEADDWKPFYEAYGSQFGDIEIEMDRRNSAIPLKDLTNTNARIEPGAFIREQAIIEDGAVVMMGATINIGAVVGEGTMIDMNATLGGRATTGKNVHVGAGAVLAGVIEPPSASPVIIEDDVLIGANAVILEGVRVGKGAIVAAGAIVTQDVPAGAVVAGTPAKVIKQASEVQDTKKEIVAALRKLND.

The protein belongs to the transferase hexapeptide repeat family. DapH subfamily.

It carries out the reaction (S)-2,3,4,5-tetrahydrodipicolinate + acetyl-CoA + H2O = L-2-acetamido-6-oxoheptanedioate + CoA. Its pathway is amino-acid biosynthesis; L-lysine biosynthesis via DAP pathway; LL-2,6-diaminopimelate from (S)-tetrahydrodipicolinate (acetylase route): step 1/3. In terms of biological role, catalyzes the transfer of an acetyl group from acetyl-CoA to tetrahydrodipicolinate. The chain is 2,3,4,5-tetrahydropyridine-2,6-dicarboxylate N-acetyltransferase from Staphylococcus aureus (strain MRSA252).